Here is a 652-residue protein sequence, read N- to C-terminus: Drebrin (652 aa).

The residue at position 2 (Ala2) is an N-acetylalanine. Residues Gly5–Ser134 form the ADF-H domain. Basic and acidic residues-rich tracts occupy residues Met211–Arg236 and Asp288–Glu298. Disordered regions lie at residues Met211–Cys350 and Ser371–Leu652. Residues Ser328–Pro340 are compositionally biased toward low complexity. Positions Pro507–Pro517 are enriched in pro residues. Acidic residues-rich tracts occupy residues Gln540–Thr554 and Pro640–Leu652.

As to expression, brain neurons.

Its subcellular location is the cytoplasm. The protein resides in the cell projection. The protein localises to the dendrite. It is found in the cell cortex. It localises to the cell junction. Its subcellular location is the growth cone. Actin cytoskeleton-organizing protein that plays a role in the formation of cell projections. Plays a role in dendritic spine morphogenesis and organization, including the localization of the dopamine receptor DRD1 to the dendritic spines. Involved in synaptic plasticity. The sequence is that of Drebrin (DBN1) from Gallus gallus (Chicken).